Consider the following 430-residue polypeptide: Adenylosuccinate synthetase (430 aa).

GTP is bound by residues 13–19 (GDEGKGK) and 41–43 (GHT). The active-site Proton acceptor is Asp14. Mg(2+) is bound by residues Asp14 and Gly41. IMP is bound by residues 14–17 (DEGK), 39–42 (NAGH), Thr130, Arg144, Gln225, Thr240, and Arg304. His42 (proton donor) is an active-site residue. Position 300 to 306 (300 to 306 (ATTGRAR)) interacts with substrate. Residues Arg306, 332–334 (KLD), and 414–416 (STG) contribute to the GTP site.

It belongs to the adenylosuccinate synthetase family. Homodimer. The cofactor is Mg(2+).

The protein localises to the cytoplasm. It catalyses the reaction IMP + L-aspartate + GTP = N(6)-(1,2-dicarboxyethyl)-AMP + GDP + phosphate + 2 H(+). Its pathway is purine metabolism; AMP biosynthesis via de novo pathway; AMP from IMP: step 1/2. Its function is as follows. Plays an important role in the de novo pathway of purine nucleotide biosynthesis. Catalyzes the first committed step in the biosynthesis of AMP from IMP. The sequence is that of Adenylosuccinate synthetase from Pseudomonas syringae pv. syringae (strain B728a).